We begin with the raw amino-acid sequence, 283 residues long: GDP-polyphosphate phosphotransferase (283 aa).

It belongs to the polyphosphate kinase 2 (PPK2) family. Class I subfamily.

The enzyme catalyses [phosphate](n) + GTP = [phosphate](n+1) + GDP. In terms of biological role, uses inorganic polyphosphate (polyP) as a donor to convert GDP to GTP. This Mycolicibacterium smegmatis (strain ATCC 700084 / mc(2)155) (Mycobacterium smegmatis) protein is GDP-polyphosphate phosphotransferase.